The primary structure comprises 989 residues: AP-2 complex subunit alpha-2 (989 aa).

HEAT repeat units lie at residues 112 to 149 (EMLPLIINSFKEDLLARSDYFQSLALAAICNIGGKEVA), 188 to 225 (VTPDSWVERLVSVLDEPDFGVLTSLMSLLIELASENPI), 368 to 402 (IMIKKYQDTVLLSLKDSDISIRRRALDLLYGMCDK), and 403 to 440 (NTCKHIVAELLSYLQTADYAIREELVIKIANLAEKFAS). The segment at 610–745 (DNSNTTSNTA…SSSPISSGGS (136 aa)) is disordered. Low complexity predominate over residues 611 to 623 (NSNTTSNTANNSN). Positions 624-638 (MINSQDSKISSGGFN) are enriched in polar residues. Low complexity predominate over residues 639–703 (QSPQPSQQQQ…QPVYQQQQQA (65 aa)). Over residues 704–714 (ESFSPVQSDTV) the composition is skewed to polar residues. The span at 715 to 745 (SSFGQQQQQQQGGFSSPTIQASSSPISSGGS) shows a compositional bias: low complexity.

This sequence belongs to the adaptor complexes large subunit family. As to quaternary structure, adaptor protein complex 2 (AP-2) is a heterotetramer composed of two large adaptins (alpha-type and beta-type subunits), a medium adaptin (mu-type subunit AP50) and a small adaptin (sigma-type subunit AP17).

It is found in the cell membrane. The protein resides in the membrane. Its subcellular location is the coated pit. Component of the adaptor complexes which link clathrin to receptors in coated vesicles. Clathrin-associated protein complexes are believed to interact with the cytoplasmic tails of membrane proteins, leading to their selection and concentration. This Dictyostelium discoideum (Social amoeba) protein is AP-2 complex subunit alpha-2 (ap2a1-1).